Reading from the N-terminus, the 193-residue chain is MQELEERIREQGVVKPGNVLKVDAFLNHQCDVRLFDHMGAAWAEHFNNKHITKILTIEASGIGIACVAATHFDDVPVVFAKKAQSINLDGEQYVTHVYSFTKQKEFPVIVSKKYLNAGDRVLLIDDFLANGKALNGLIELCESAGAIVEGIGIAIEKGFQGGGDALREAGYDLDSLAIVESMDAETGAIEFRH.

Xanthine contacts are provided by leucine 20 and asparagine 27. 129-133 (ANGKA) lines the 5-phospho-alpha-D-ribose 1-diphosphate pocket. Lysine 157 is a xanthine binding site.

The protein belongs to the purine/pyrimidine phosphoribosyltransferase family. Xpt subfamily. Homodimer.

It localises to the cytoplasm. The enzyme catalyses XMP + diphosphate = xanthine + 5-phospho-alpha-D-ribose 1-diphosphate. It participates in purine metabolism; XMP biosynthesis via salvage pathway; XMP from xanthine: step 1/1. Its function is as follows. Converts the preformed base xanthine, a product of nucleic acid breakdown, to xanthosine 5'-monophosphate (XMP), so it can be reused for RNA or DNA synthesis. The chain is Xanthine phosphoribosyltransferase from Bifidobacterium animalis subsp. lactis (strain AD011).